The chain runs to 105 residues: Large ribosomal subunit protein uL24 (105 aa).

Belongs to the universal ribosomal protein uL24 family. In terms of assembly, part of the 50S ribosomal subunit.

Its function is as follows. One of two assembly initiator proteins, it binds directly to the 5'-end of the 23S rRNA, where it nucleates assembly of the 50S subunit. In terms of biological role, one of the proteins that surrounds the polypeptide exit tunnel on the outside of the subunit. This Methylobacillus flagellatus (strain ATCC 51484 / DSM 6875 / VKM B-1610 / KT) protein is Large ribosomal subunit protein uL24.